A 457-amino-acid polypeptide reads, in one-letter code: Serine/threonine-protein phosphatase 2A activator 2 (457 aa).

2 disordered regions span residues 387 to 407 (DAHGHIHPAGKPHAHGTGEGQ) and 426 to 457 (AEQEKKRQQGNFSSTMLGEKPFGTGVRRIPFD). The span at 391–400 (HIHPAGKPHA) shows a compositional bias: basic residues.

This sequence belongs to the PTPA-type PPIase family.

The protein localises to the cytoplasm. The enzyme catalyses [protein]-peptidylproline (omega=180) = [protein]-peptidylproline (omega=0). In terms of biological role, PPIases accelerate the folding of proteins. It catalyzes the cis-trans isomerization of proline imidic peptide bonds in oligopeptides. Acts as a regulatory subunit for PP2A-like phosphatases modulating their activity or substrate specificity, probably by inducing a conformational change in the catalytic subunit, a direct target of the PPIase. Can reactivate inactive phosphatase PP2A-phosphatase methylesterase complexes (PP2Ai) in presence of ATP and Mg(2+) by dissociating the inactive form from the complex. The polypeptide is Serine/threonine-protein phosphatase 2A activator 2 (RRD2) (Mycosarcoma maydis (Corn smut fungus)).